We begin with the raw amino-acid sequence, 20 residues long: Cytochrome c oxidase subunit 6A2, mitochondrial (20 aa).

A disordered region spans residues 1–20; sequence ASGAKGDHGGAGASTXXLLT.

It belongs to the cytochrome c oxidase subunit 6A family. In terms of assembly, component of the cytochrome c oxidase (complex IV, CIV), a multisubunit enzyme composed of 14 subunits. The complex is composed of a catalytic core of 3 subunits MT-CO1, MT-CO2 and MT-CO3, encoded in the mitochondrial DNA, and 11 supernumerary subunits COX4I, COX5A, COX5B, COX6A, COX6B, COX6C, COX7A, COX7B, COX7C, COX8 and NDUFA4, which are encoded in the nuclear genome. The complex exists as a monomer or a dimer and forms supercomplexes (SCs) in the inner mitochondrial membrane with NADH-ubiquinone oxidoreductase (complex I, CI) and ubiquinol-cytochrome c oxidoreductase (cytochrome b-c1 complex, complex III, CIII), resulting in different assemblies (supercomplex SCI(1)III(2)IV(1) and megacomplex MCI(2)III(2)IV(2)). In terms of tissue distribution, heart specific isoform.

It localises to the mitochondrion inner membrane. Its pathway is energy metabolism; oxidative phosphorylation. In terms of biological role, component of the cytochrome c oxidase, the last enzyme in the mitochondrial electron transport chain which drives oxidative phosphorylation. The respiratory chain contains 3 multisubunit complexes succinate dehydrogenase (complex II, CII), ubiquinol-cytochrome c oxidoreductase (cytochrome b-c1 complex, complex III, CIII) and cytochrome c oxidase (complex IV, CIV), that cooperate to transfer electrons derived from NADH and succinate to molecular oxygen, creating an electrochemical gradient over the inner membrane that drives transmembrane transport and the ATP synthase. Cytochrome c oxidase is the component of the respiratory chain that catalyzes the reduction of oxygen to water. Electrons originating from reduced cytochrome c in the intermembrane space (IMS) are transferred via the dinuclear copper A center (CU(A)) of subunit 2 and heme A of subunit 1 to the active site in subunit 1, a binuclear center (BNC) formed by heme A3 and copper B (CU(B)). The BNC reduces molecular oxygen to 2 water molecules unsing 4 electrons from cytochrome c in the IMS and 4 protons from the mitochondrial matrix. Plays a role in the assembly and stabilization of complex IV. The sequence is that of Cytochrome c oxidase subunit 6A2, mitochondrial (COX6A2) from Canis lupus familiaris (Dog).